A 113-amino-acid polypeptide reads, in one-letter code: N(2)-fixation sustaining protein CowN (113 aa).

Belongs to the CowN family.

Is required to sustain N(2)-dependent growth in the presence of low levels of carbon monoxide (CO). Probably acts by protecting the N(2) fixation ability of the nitrogenase complex, which is inactivated in the presence of CO. The protein is N(2)-fixation sustaining protein CowN of Wolinella succinogenes (strain ATCC 29543 / DSM 1740 / CCUG 13145 / JCM 31913 / LMG 7466 / NCTC 11488 / FDC 602W) (Vibrio succinogenes).